The chain runs to 312 residues: Ribosomal RNA small subunit methyltransferase H (312 aa).

Residues 35-37 (GGH), Asp55, Phe79, Asp101, and Gln108 contribute to the S-adenosyl-L-methionine site.

Belongs to the methyltransferase superfamily. RsmH family.

It localises to the cytoplasm. The catalysed reaction is cytidine(1402) in 16S rRNA + S-adenosyl-L-methionine = N(4)-methylcytidine(1402) in 16S rRNA + S-adenosyl-L-homocysteine + H(+). Its function is as follows. Specifically methylates the N4 position of cytidine in position 1402 (C1402) of 16S rRNA. The sequence is that of Ribosomal RNA small subunit methyltransferase H from Buchnera aphidicola subsp. Schizaphis graminum (strain Sg).